Here is a 457-residue protein sequence, read N- to C-terminus: tRNA-2-methylthio-N(6)-dimethylallyladenosine synthase (457 aa).

The MTTase N-terminal domain occupies 3-120; the sequence is KKVYVKTFGC…LPQMIDARRE (118 aa). [4Fe-4S] cluster-binding residues include Cys-12, Cys-49, Cys-83, Cys-157, Cys-161, and Cys-164. Residues 143 to 377 form the Radical SAM core domain; that stretch reads RVEGPSAFVS…QATIEENVAR (235 aa). Residues 380–447 form the TRAM domain; the sequence is QSMVGKVERI…PHSLRGELVL (68 aa).

It belongs to the methylthiotransferase family. MiaB subfamily. As to quaternary structure, monomer. Requires [4Fe-4S] cluster as cofactor.

The protein localises to the cytoplasm. The enzyme catalyses N(6)-dimethylallyladenosine(37) in tRNA + (sulfur carrier)-SH + AH2 + 2 S-adenosyl-L-methionine = 2-methylsulfanyl-N(6)-dimethylallyladenosine(37) in tRNA + (sulfur carrier)-H + 5'-deoxyadenosine + L-methionine + A + S-adenosyl-L-homocysteine + 2 H(+). Catalyzes the methylthiolation of N6-(dimethylallyl)adenosine (i(6)A), leading to the formation of 2-methylthio-N6-(dimethylallyl)adenosine (ms(2)i(6)A) at position 37 in tRNAs that read codons beginning with uridine. The protein is tRNA-2-methylthio-N(6)-dimethylallyladenosine synthase of Burkholderia lata (strain ATCC 17760 / DSM 23089 / LMG 22485 / NCIMB 9086 / R18194 / 383).